We begin with the raw amino-acid sequence, 215 residues long: Cytochrome b6 (215 aa).

A helical transmembrane segment spans residues 32 to 52 (IFYCLGGITLTCFLVQVASGF). Cys-35 contributes to the heme c binding site. 2 residues coordinate heme b: His-86 and His-100. 3 helical membrane-spanning segments follow: residues 90–110 (ASMMVLMMILHVFRVYLTGGF), 116–136 (LTWVTGVILAVLTVSFGVTGY), and 186–206 (LHTFVLPLLTAVLMLMHFLMI). Heme b contacts are provided by His-187 and His-202.

It belongs to the cytochrome b family. PetB subfamily. As to quaternary structure, the 4 large subunits of the cytochrome b6-f complex are cytochrome b6, subunit IV (17 kDa polypeptide, PetD), cytochrome f and the Rieske protein, while the 4 small subunits are PetG, PetL, PetM and PetN. The complex functions as a dimer. Heme b is required as a cofactor. Requires heme c as cofactor.

Its subcellular location is the plastid. It is found in the chloroplast thylakoid membrane. Its function is as follows. Component of the cytochrome b6-f complex, which mediates electron transfer between photosystem II (PSII) and photosystem I (PSI), cyclic electron flow around PSI, and state transitions. The chain is Cytochrome b6 from Anthoceros angustus (Hornwort).